The chain runs to 331 residues: PTS-dependent dihydroxyacetone kinase 2, dihydroxyacetone-binding subunit DhaK (331 aa).

In terms of domain architecture, DhaK spans 7-328 (DGYEAVEEML…LDTPCDTPYF (322 aa)). Residues 55–58 (GSGH) and aspartate 111 contribute to the dihydroxyacetone site. Catalysis depends on histidine 58, which acts as the Proton acceptor. Histidine 218 serves as the catalytic Tele-hemiaminal-histidine intermediate.

In terms of assembly, homodimer. The dihydroxyacetone kinase complex is composed of a homodimer of DhaM, a homodimer of DhaK and the subunit DhaL.

Its subcellular location is the cytoplasm. The catalysed reaction is dihydroxyacetone + phosphoenolpyruvate = dihydroxyacetone phosphate + pyruvate. Its pathway is polyol metabolism; glycerol degradation. Dihydroxyacetone binding subunit of the dihydroxyacetone kinase, which is responsible for the phosphoenolpyruvate (PEP)-dependent phosphorylation of dihydroxyacetone via a phosphoryl group transfer from DhaL-ATP. The sequence is that of PTS-dependent dihydroxyacetone kinase 2, dihydroxyacetone-binding subunit DhaK from Listeria innocua serovar 6a (strain ATCC BAA-680 / CLIP 11262).